We begin with the raw amino-acid sequence, 286 residues long: NADP-dependent dehydrogenase clz5 (286 aa).

Residues S49, L51, D93, Y207, K211, I241, and Q245 each contribute to the NADP(+) site. The active-site Proton acceptor is the Y207. Y207 serves as the catalytic Proton donor. K211 serves as the catalytic Lowers pKa of active site Tyr.

Belongs to the short-chain dehydrogenases/reductases (SDR) family. Homodimer.

The protein localises to the cytoplasm. It is found in the cytosol. Its pathway is secondary metabolite biosynthesis. Functionally, NADP-dependent dehydrogenase; part of the gene cluster that mediates the biosynthesis of squalestatin S1 (SQS1, also known as zaragozic acid A), a heavily oxidized fungal polyketide that offers potent cholesterol lowering activity by targeting squalene synthase (SS). SQS1 is composed of a 2,8-dioxobicyclic[3.2.1]octane-3,4,5-tricarboxyclic acid core that is connected to two lipophilic polyketide arms. These initial steps feature the priming of an unusual benzoic acid starter unit onto the highly reducing polyketide synthase clz14, followed by oxaloacetate extension and product release to generate a tricarboxylic acid containing product. The phenylalanine ammonia lyase (PAL) clz10 and the acyl-CoA ligase clz12 are involved in transforming phenylalanine into benzoyl-CoA. The citrate synthase-like protein clz17 is involved in connecting the C-alpha-carbons of the hexaketide chain and oxaloacetate to afford the tricarboxylic acid unit. The potential hydrolytic enzymes, clz11 and clz13, are in close proximity to pks2 and may participate in product release. On the other side, the tetraketide arm is synthesized by a the squalestatin tetraketide synthase clz2 and enzymatically esterified to the core in the last biosynthetic step, by the acetyltransferase clz6. The biosynthesis of the tetraketide must involve 3 rounds of chain extension. After the first and second rounds methyl-transfer occurs, and in all rounds of extension the ketoreductase and dehydratase are active. The enoyl reductase and C-MeT of clz2 are not active in the final round of extension. The acetyltransferase clz6 appears to have a broad substrate selectivity for its acyl CoA substrate, allowing the in vitro synthesis of novel squalestatins. The biosynthesis of SQS1 requires several oxidative steps likely performed by oxidoreductases clz3, clz15 and clz16. Finally, in support of the identification of the cluster as being responsible for SQS1 production, the cluster contains a gene encoding a putative squalene synthase (SS) clz20, suggesting a likely mechanism for self-resistance. This chain is NADP-dependent dehydrogenase clz5, found in Cochliobolus lunatus (Filamentous fungus).